The following is a 165-amino-acid chain: Sec-independent protein translocase protein TatB (165 aa).

A helical membrane pass occupies residues 1–21; that stretch reads MFDVSFTELIVIGVVALIVLG. The span at 67–84 shows a compositional bias: polar residues; that stretch reads DSTAQDVNQSLRSATDSL. Residues 67–165 form a disordered region; it reads DSTAQDVNQS…PKSPSTGNAT (99 aa). The segment covering 127 to 159 has biased composition (low complexity); that stretch reads KLPGTPATLPATAAAEPTPAAPAASQAEAPKSP.

The protein belongs to the TatB family. The Tat system comprises two distinct complexes: a TatABC complex, containing multiple copies of TatA, TatB and TatC subunits, and a separate TatA complex, containing only TatA subunits. Substrates initially bind to the TatABC complex, which probably triggers association of the separate TatA complex to form the active translocon.

Its subcellular location is the cell inner membrane. Functionally, part of the twin-arginine translocation (Tat) system that transports large folded proteins containing a characteristic twin-arginine motif in their signal peptide across membranes. Together with TatC, TatB is part of a receptor directly interacting with Tat signal peptides. TatB may form an oligomeric binding site that transiently accommodates folded Tat precursor proteins before their translocation. The protein is Sec-independent protein translocase protein TatB of Bordetella avium (strain 197N).